Here is a 953-residue protein sequence, read N- to C-terminus: Isoleucine--tRNA ligase (953 aa).

The short motif at 58-68 (PYANGSIHIGH) is the 'HIGH' region element. Glutamate 577 contacts L-isoleucyl-5'-AMP. The 'KMSKS' region signature appears at 618 to 622 (KMSKS). Lysine 621 is a binding site for ATP. Residues cysteine 916, cysteine 919, cysteine 936, and cysteine 939 each coordinate Zn(2+).

The protein belongs to the class-I aminoacyl-tRNA synthetase family. IleS type 1 subfamily. Monomer. Zn(2+) is required as a cofactor.

The protein localises to the cytoplasm. The catalysed reaction is tRNA(Ile) + L-isoleucine + ATP = L-isoleucyl-tRNA(Ile) + AMP + diphosphate. In terms of biological role, catalyzes the attachment of isoleucine to tRNA(Ile). As IleRS can inadvertently accommodate and process structurally similar amino acids such as valine, to avoid such errors it has two additional distinct tRNA(Ile)-dependent editing activities. One activity is designated as 'pretransfer' editing and involves the hydrolysis of activated Val-AMP. The other activity is designated 'posttransfer' editing and involves deacylation of mischarged Val-tRNA(Ile). The chain is Isoleucine--tRNA ligase from Aeromonas salmonicida (strain A449).